A 915-amino-acid chain; its full sequence is MVQLGKLLRVLTLMKFPCCVLEVLLCVLAAAARGQEMYAPHSIRIEGDVTLGGLFPVHAKGPSGVPCGDIKRENGIHRLEAMLYALDQINSDPNLLPNVTLGARILDTCSRDTYALEQSLTFVQALIQKDTSDVRCTNGEPPVFVKPEKVVGVIGASGSSVSIMVANILRLFQIPQISYASTAPELSDDRRYDFFSRVVPPDSFQAQAMVDIVKALGWNYVSTLASEGSYGEKGVESFTQISKEAGGLCIAQSVRIPQERKDRTIDFDRIIKQLLDTPNSRAVVIFANDEDIKQILAAAKRADQVGHFLWVGSDSWGSKINPLHQHEDIAEGAITIQPKRATVEGFDAYFTSRTLENNRRNVWFAEYWEENFNCKLTISGSKKEDTDRKCTGQERIGKDSNYEQEGKVQFVIDAVYAMAHALHHMNKDLCADYRGVCPEMEQAGGKKLLKYIRHVNFNGSAGTPVMFNKNGDAPGRYDIFQYQTTNTTNPGYRLIGQWTDELQLNIEDMQWGKGVREIPSSVCTLPCKPGQRKKTQKGTPCCWTCEPCDGYQYQFDEMTCQHCPYDQRPNENRTGCQNIPIIKLEWHSPWAVIPVFLAMLGIIATIFVMATFIRYNDTPIVRASGRELSYVLLTGIFLCYIITFLMIAKPDVAVCSFRRVFLGLGMCISYAALLTKTNRIYRIFEQGKKSVTAPRLISPTSQLAITSSLISVQLLGVFIWFGVDPPNIIIDYDEHKTMNPEQARGVLKCDITDLQIICSLGYSILLMVTCTVYAIKTRGVPENFNEAKPIGFTMYTTCIVWLAFIPIFFGTAQSAEKLYIQTTTLTISMNLSASVALGMLYMPKVYIIIFHPELNVQKRKRSFKAVVTAATMSSRLSHKPSDRPNGEAKTELCENVDPNSPAAKKKYVSYNNLVI.

The N-terminal stretch at 1–34 (MVQLGKLLRVLTLMKFPCCVLEVLLCVLAAAARG) is a signal peptide. At 35–590 (QEMYAPHSIR…IIKLEWHSPW (556 aa)) the chain is on the extracellular side. Cysteine 67 and cysteine 109 are oxidised to a cystine. The N-linked (GlcNAc...) asparagine glycan is linked to asparagine 98. L-glutamate-binding positions include serine 159, 180–182 (AST), tyrosine 230, and aspartate 314. 7 cysteine pairs are disulfide-bonded: cysteine 249–cysteine 541, cysteine 374–cysteine 390, cysteine 430–cysteine 437, cysteine 523–cysteine 542, cysteine 527–cysteine 545, cysteine 548–cysteine 560, and cysteine 563–cysteine 576. Lysine 407 provides a ligand contact to L-glutamate. 2 N-linked (GlcNAc...) asparagine glycosylation sites follow: asparagine 458 and asparagine 486. Asparagine 572 carries an N-linked (GlcNAc...) asparagine glycan. Residues 591–615 (AVIPVFLAMLGIIATIFVMATFIRY) form a helical membrane-spanning segment. Residues 616–627 (NDTPIVRASGRE) lie on the Cytoplasmic side of the membrane. The helical transmembrane segment at 628 to 648 (LSYVLLTGIFLCYIITFLMIA) threads the bilayer. Residues 649–654 (KPDVAV) are Extracellular-facing. The helical transmembrane segment at 655-675 (CSFRRVFLGLGMCISYAALLT) threads the bilayer. Over 676–702 (KTNRIYRIFEQGKKSVTAPRLISPTSQ) the chain is Cytoplasmic. Residues 703–723 (LAITSSLISVQLLGVFIWFGV) form a helical membrane-spanning segment. At 724 to 753 (DPPNIIIDYDEHKTMNPEQARGVLKCDITD) the chain is on the extracellular side. Residues 754–775 (LQIICSLGYSILLMVTCTVYAI) form a helical membrane-spanning segment. The Cytoplasmic segment spans residues 776–788 (KTRGVPENFNEAK). The chain crosses the membrane as a helical span at residues 789–810 (PIGFTMYTTCIVWLAFIPIFFG). Residues 811–825 (TAQSAEKLYIQTTTL) are Extracellular-facing. The chain crosses the membrane as a helical span at residues 826-850 (TISMNLSASVALGMLYMPKVYIIIF). Residues 851–915 (HPELNVQKRK…KYVSYNNLVI (65 aa)) are Cytoplasmic-facing. The segment at 874–895 (SRLSHKPSDRPNGEAKTELCEN) is disordered. Basic and acidic residues predominate over residues 879–892 (KPSDRPNGEAKTEL). Serine 900 is subject to Phosphoserine.

The protein belongs to the G-protein coupled receptor 3 family. Homodimer. Interacts with PICK1. Widely distributed throughout the brain.

The protein resides in the cell membrane. Functionally, G-protein coupled receptor activated by glutamate that regulates axon outgrowth through the MAPK-cAMP-PKA signaling pathway during neuronal development. Ligand binding causes a conformation change that triggers signaling via guanine nucleotide-binding proteins (G proteins) and modulates the activity of downstream effectors, such as adenylate cyclase that it inhibits. This chain is Metabotropic glutamate receptor 7 (Grm7), found in Rattus norvegicus (Rat).